Here is a 211-residue protein sequence, read N- to C-terminus: Pyridoxine/pyridoxamine 5'-phosphate oxidase (211 aa).

Residues 7–10 and Lys-65 each bind substrate; that span reads RRDY. Residues 60-65, 75-76, Arg-81, Lys-82, and Gln-104 contribute to the FMN site; these read RIVLLK and YT. Tyr-122, Arg-126, and Ser-130 together coordinate substrate. FMN is bound by residues 139–140 and Trp-184; that span reads QS. 190–192 contributes to the substrate binding site; that stretch reads RLH. An FMN-binding site is contributed by Arg-194.

The protein belongs to the pyridoxamine 5'-phosphate oxidase family. Homodimer. FMN serves as cofactor.

The catalysed reaction is pyridoxamine 5'-phosphate + O2 + H2O = pyridoxal 5'-phosphate + H2O2 + NH4(+). The enzyme catalyses pyridoxine 5'-phosphate + O2 = pyridoxal 5'-phosphate + H2O2. Its pathway is cofactor metabolism; pyridoxal 5'-phosphate salvage; pyridoxal 5'-phosphate from pyridoxamine 5'-phosphate: step 1/1. It participates in cofactor metabolism; pyridoxal 5'-phosphate salvage; pyridoxal 5'-phosphate from pyridoxine 5'-phosphate: step 1/1. Its function is as follows. Catalyzes the oxidation of either pyridoxine 5'-phosphate (PNP) or pyridoxamine 5'-phosphate (PMP) into pyridoxal 5'-phosphate (PLP). The protein is Pyridoxine/pyridoxamine 5'-phosphate oxidase of Aliivibrio fischeri (strain ATCC 700601 / ES114) (Vibrio fischeri).